The sequence spans 155 residues: Ribosomal RNA large subunit methyltransferase H (155 aa).

Residues L72, G103, and 122–127 (LSALTL) each bind S-adenosyl-L-methionine.

Belongs to the RNA methyltransferase RlmH family. In terms of assembly, homodimer.

It is found in the cytoplasm. The catalysed reaction is pseudouridine(1915) in 23S rRNA + S-adenosyl-L-methionine = N(3)-methylpseudouridine(1915) in 23S rRNA + S-adenosyl-L-homocysteine + H(+). Its function is as follows. Specifically methylates the pseudouridine at position 1915 (m3Psi1915) in 23S rRNA. This Enterobacter sp. (strain 638) protein is Ribosomal RNA large subunit methyltransferase H.